A 61-amino-acid chain; its full sequence is Small ribosomal subunit protein uS14 (61 aa).

Over residues 1-14 (MAKTSQKVRNHRPA) the composition is skewed to basic residues. Residues 1 to 20 (MAKTSQKVRNHRPAKFSSRE) form a disordered region. Zn(2+)-binding residues include cysteine 24, cysteine 27, cysteine 40, and cysteine 43.

This sequence belongs to the universal ribosomal protein uS14 family. Zinc-binding uS14 subfamily. As to quaternary structure, part of the 30S ribosomal subunit. Contacts proteins S3 and S10. Zn(2+) is required as a cofactor.

Its function is as follows. Binds 16S rRNA, required for the assembly of 30S particles and may also be responsible for determining the conformation of the 16S rRNA at the A site. The protein is Small ribosomal subunit protein uS14 of Lactobacillus delbrueckii subsp. bulgaricus (strain ATCC 11842 / DSM 20081 / BCRC 10696 / JCM 1002 / NBRC 13953 / NCIMB 11778 / NCTC 12712 / WDCM 00102 / Lb 14).